Consider the following 619-residue polypeptide: Dihydroxy-acid dehydratase (619 aa).

Aspartate 81 is a Mg(2+) binding site. Cysteine 122 serves as a coordination point for [2Fe-2S] cluster. 2 residues coordinate Mg(2+): aspartate 123 and lysine 124. N6-carboxylysine is present on lysine 124. Residue cysteine 195 participates in [2Fe-2S] cluster binding. Glutamate 491 contacts Mg(2+). Serine 517 serves as the catalytic Proton acceptor.

The protein belongs to the IlvD/Edd family. As to quaternary structure, homodimer. [2Fe-2S] cluster serves as cofactor. Requires Mg(2+) as cofactor.

It carries out the reaction (2R)-2,3-dihydroxy-3-methylbutanoate = 3-methyl-2-oxobutanoate + H2O. The catalysed reaction is (2R,3R)-2,3-dihydroxy-3-methylpentanoate = (S)-3-methyl-2-oxopentanoate + H2O. The protein operates within amino-acid biosynthesis; L-isoleucine biosynthesis; L-isoleucine from 2-oxobutanoate: step 3/4. It functions in the pathway amino-acid biosynthesis; L-valine biosynthesis; L-valine from pyruvate: step 3/4. Its function is as follows. Functions in the biosynthesis of branched-chain amino acids. Catalyzes the dehydration of (2R,3R)-2,3-dihydroxy-3-methylpentanoate (2,3-dihydroxy-3-methylvalerate) into 2-oxo-3-methylpentanoate (2-oxo-3-methylvalerate) and of (2R)-2,3-dihydroxy-3-methylbutanoate (2,3-dihydroxyisovalerate) into 2-oxo-3-methylbutanoate (2-oxoisovalerate), the penultimate precursor to L-isoleucine and L-valine, respectively. This is Dihydroxy-acid dehydratase from Rhodopseudomonas palustris (strain HaA2).